We begin with the raw amino-acid sequence, 132 residues long: Small ribosomal subunit protein uS8 (132 aa).

Belongs to the universal ribosomal protein uS8 family. Part of the 30S ribosomal subunit. Contacts proteins S5 and S12.

One of the primary rRNA binding proteins, it binds directly to 16S rRNA central domain where it helps coordinate assembly of the platform of the 30S subunit. The polypeptide is Small ribosomal subunit protein uS8 (Bradyrhizobium sp. (strain ORS 278)).